Consider the following 316-residue polypeptide: Transaldolase (316 aa).

The Schiff-base intermediate with substrate role is filled by Lys-132.

Belongs to the transaldolase family. Type 1 subfamily.

The protein localises to the cytoplasm. It catalyses the reaction D-sedoheptulose 7-phosphate + D-glyceraldehyde 3-phosphate = D-erythrose 4-phosphate + beta-D-fructose 6-phosphate. It functions in the pathway carbohydrate degradation; pentose phosphate pathway; D-glyceraldehyde 3-phosphate and beta-D-fructose 6-phosphate from D-ribose 5-phosphate and D-xylulose 5-phosphate (non-oxidative stage): step 2/3. Functionally, transaldolase is important for the balance of metabolites in the pentose-phosphate pathway. This is Transaldolase from Methylomonas aminofaciens.